The following is a 164-amino-acid chain: S-ribosylhomocysteine lyase (164 aa).

Fe cation-binding residues include His54, His58, and Cys128.

It belongs to the LuxS family. As to quaternary structure, homodimer. Fe cation serves as cofactor.

The enzyme catalyses S-(5-deoxy-D-ribos-5-yl)-L-homocysteine = (S)-4,5-dihydroxypentane-2,3-dione + L-homocysteine. Functionally, involved in the synthesis of autoinducer 2 (AI-2) which is secreted by bacteria and is used to communicate both the cell density and the metabolic potential of the environment. The regulation of gene expression in response to changes in cell density is called quorum sensing. Catalyzes the transformation of S-ribosylhomocysteine (RHC) to homocysteine (HC) and 4,5-dihydroxy-2,3-pentadione (DPD). The sequence is that of S-ribosylhomocysteine lyase from Campylobacter jejuni subsp. jejuni serotype O:23/36 (strain 81-176).